The following is a 506-amino-acid chain: Maturase K (506 aa).

This sequence belongs to the intron maturase 2 family. MatK subfamily.

It is found in the plastid. The protein resides in the chloroplast. In terms of biological role, usually encoded in the trnK tRNA gene intron. Probably assists in splicing its own and other chloroplast group II introns. The sequence is that of Maturase K from Wisteria frutescens (American wisteria).